The primary structure comprises 1175 residues: Atrophin-1 (1175 aa).

Disordered regions lie at residues 1 to 595, 608 to 752, and 770 to 847; these read MKTR…VTTS, SSPA…ARFN, and VPLE…HRPP. Residues 16 to 32 carry the Nuclear localization signal motif; that stretch reads RKKEAPGPREELRSRGR. Over residues 17–29 the composition is skewed to basic and acidic residues; that stretch reads KKEAPGPREELRS. Position 34 is a phosphoserine (serine 34). The span at 45-63 shows a compositional bias: basic and acidic residues; that stretch reads GKAEKSRQTAKKARIEEPS. 5 positions are modified to phosphoserine: serine 77, serine 79, serine 101, serine 103, and serine 107. The segment covering 108–128 has biased composition (basic and acidic residues); the sequence is LDGRSINDDGSSDPRDIDQDN. Polar residues predominate over residues 129–152; the sequence is RSTSPSIYSPGSVENDSDSSSGLS. 2 stretches are compositionally biased toward pro residues: residues 158–174 and 208–217; these read PYHPPPLFPPSPPPPDS and GPPPGAPPTH. Low complexity-rich tracts occupy residues 240-253 and 262-273; these read GAAASSVGAPSGGK and IPISSSGASGAP. A compositionally biased stretch (pro residues) spans 345-374; that stretch reads PPGPEKGPTLAPSPHPLPPASSSAPGPPMR. The segment covering 378-396 has biased composition (low complexity); sequence SSSSSSAAASSSSSSSSAS. Polar residues predominate over residues 416-437; it reads SMSVSNQPPKYTQPSLPSQAVW. Residues 476-491 are compositionally biased toward basic residues; sequence THHHHQQQPQQQHHHG. The involved in binding BAIAP2 stretch occupies residues 503–553; the sequence is HPLESSNSHHAHPYNMSPSLGSLRPYPPGPAHLPPPHGQVSYNQAGPNGPP. Residues 527 to 539 show a composition bias toward pro residues; the sequence is PYPPGPAHLPPPH. A compositionally biased stretch (low complexity) spans 547 to 584; that stretch reads AGPNGPPVSSSNSSGSSSQASYSCSHPSSSQGPQGASY. Serine 617 carries the phosphoserine modification. Lysine 626 is modified (N6-acetyllysine). Threonine 638 carries the phosphothreonine modification. Phosphoserine is present on serine 646. At threonine 654 the chain carries Phosphothreonine. Pro residues-rich tracts occupy residues 693 to 703 and 722 to 737; these read LPPPPAAPTTG and PESPVPPARSPSPPPK. Phosphoserine; by MAPK8 is present on serine 724. 2 positions are modified to phosphoserine: serine 731 and serine 733. A compositionally biased stretch (basic and acidic residues) spans 780–824; the sequence is KRADLVEKVRREAEQRAREEKEREREREREKEREREKERELERSV. Positions 864–879 are required for interaction with FAT1; sequence DTPALRTLSEYARPHV. Position 881 is a phosphoserine (serine 881). The segment at 913–932 is disordered; sequence PAAREREREARERDLRDRLK. Positions 914–932 are enriched in basic and acidic residues; sequence AAREREREARERDLRDRLK. The Nuclear export signal motif lies at 1018–1026; the sequence is ALGNDPLAR. Arginine 1100 bears the Asymmetric dimethylarginine mark. Residue lysine 1168 forms a Glycyl lysine isopeptide (Lys-Gly) (interchain with G-Cter in SUMO2) linkage.

As to quaternary structure, interacts with BAIAP2, WWP1, WWP2, WWP3 and RERE. Interacts (via its N-terminus) with MTG8; the interaction enhances transcriptional repression of MTG8. Interacts with PQBP1. Interacts with NR2E1; the interaction represses the transcriptional activity of NR2E1. Interacts with FAT1 (via a C-terminal domain). Post-translationally, phosphorylated in vitro by MAPK8/JNK1 on Ser-724. Widely expressed. Most abundant in the brain.

The protein resides in the cytoplasm. The protein localises to the perinuclear region. It is found in the cell junction. It localises to the nucleus. Functionally, transcriptional corepressor. Corepressor of MTG8 transcriptional repression. Has some intrinsic repression activity which is independent of the number of the poly-Q repeats. Recruits NR2E1 to repress transcription. Promotes vascular smooth cell (VSMC) migration and orientation. The polypeptide is Atrophin-1 (Atn1) (Mus musculus (Mouse)).